Here is a 461-residue protein sequence, read N- to C-terminus: Diacylglycerol O-acyltransferase 1 (461 aa).

The disordered stretch occupies residues 1-38 (MQDSMDDSLREAEGRQDDSEVSSGTTLGSSTPEDSGVT). Residues 1–112 (MQDSMDDSLR…TLVVAWHTSS (112 aa)) lie on the Cytoplasmic side of the membrane. Residues 7–18 (DSLREAEGRQDD) are compositionally biased toward basic and acidic residues. Over residues 21–33 (VSSGTTLGSSTPE) the composition is skewed to polar residues. Residues 113–133 (FIYMTVLVLFLAANPLMWWFM) form a helical membrane-spanning segment. At 134-230 (VPYMVYYVWN…ARPQVATGPR (97 aa)) the chain is on the lumenal side. Residues 231–251 (YIFGYHPHGVGALGAFGAIAT) traverse the membrane as a helical segment. Over 252-258 (EGCNWSK) the chain is Cytoplasmic. Residues 259–279 (VFAGIPACLCTLVNQFQIPIY) traverse the membrane as a helical segment. Over 280-332 (RDYLLGLGCTSVARKNVLKVLEQNYSVCIVVGGAQEALLSRVGSTELVLNKRK) the chain is Lumenal. Residues 333–353 (GFIKLALETGNVNLVPIYAFG) traverse the membrane as a helical segment. At 354 to 461 (ETDCFNVLDT…YAGKELKIVE (108 aa)) the chain is on the cytoplasmic side.

It belongs to the diacylglycerol acyltransferase family.

The protein resides in the lipid droplet. The protein localises to the endoplasmic reticulum membrane. It carries out the reaction an acyl-CoA + a 1,2-diacyl-sn-glycerol = a triacyl-sn-glycerol + CoA. It catalyses the reaction a 2-acylglycerol + an acyl-CoA = a 1,2-diacyl-sn-glycerol + CoA. Its pathway is glycerolipid metabolism; triacylglycerol biosynthesis. Functionally, catalyzes the terminal and only committed step in triacylglycerol (TAG) synthesis by using diacylglycerol (DAG) and fatty acyl-CoA as substrates. Required for storage lipid synthesis. Major DAG esterifying enzyme in stationary phase when TAG production is particularly active. Involved in lipid particle synthesis from the endoplasmic reticulum, promoting localized TAG production at discrete ER subdomains. The protein is Diacylglycerol O-acyltransferase 1 (DGA1) of Eremothecium gossypii (strain ATCC 10895 / CBS 109.51 / FGSC 9923 / NRRL Y-1056) (Yeast).